The primary structure comprises 870 residues: MEASLAALERPRGSASNTVFKSGPLFISSKGLGWTSWKKRWFILTRTSLVFFKNDPGTLPQKGGEVNLTLGGIDLNNSGSVVVREDKKLLTVLFPDGRDGRAFTLKAETFEDLYEWKTALEQALAQAPNAALIMGQNGIFRAETNEAIEGREKRPLKSLVVGRPILLALEDIDGSPSFLEKALQFIEKYGTKIEGILRQSADVEEVERRVQEYEQGKTEFTFDEDPHVVGDCIKHVLRELPSSPVSASCCTALLEAYRIESKEARISSLRSAIAETFPEPNRRLLQRILKMMHTISSHSHENRMNPNAVAACMAPLLLRPLLAGECDLEDDFDGGEDNSAQLLAAANAANNAQAIITVLLEDYGSIFDEENIQRCSISTESHIGNSGPDDSSDDDNNMKNGYHNADNEVEPVTDDDNDRALSGKMSESSGCTGSDLYEYKGFVADDSDIESPRDTNGPRCNSNIRTDHLMRNPFVNSTDQQAGEQIGDDPTKYGVNSCLAHVSESYQQSGTGLNVPTHGNTLAAPGLESPSAKSVNKGTPSSVHAKRATFWGRGSARKISTDGSFDSSGEDELAIQRLETTKNELRQRIAKEARGNAILQASLERRKQALHERRLSLEQDVSRLQEQLQAERDLRAALEVGLSMSSGQFSSHGVDSKTRAELEEIALAEADVARLKQKVAELHHQLNQQRQTHFGSFSDARDTHQYLQNHNPQKRFLQQDFDSTLAYVNHERKQRHEENVLGAEWRNSKGAGSFGVGNSRQPSRKQIPESTNTTDSKISEESGKISVDKLSSIDSPSIPSTSRVLDITEYPRLNHPSAAASAALVELTTRLDFFKERRSQLMEQLQNLDLNYGGSSSQDFIHRPSSPPWN.

The region spanning 18 to 125 (TVFKSGPLFI…WKTALEQALA (108 aa)) is the PH domain. Residues 167 to 367 (LALEDIDGSP…VLLEDYGSIF (201 aa)) form the Rho-GAP domain. Disordered stretches follow at residues 378 to 432 (STES…SGCT) and 446 to 465 (DSDIESPRDTNGPRCNSNIR). Over residues 407 to 417 (NEVEPVTDDDN) the composition is skewed to acidic residues. Residues 569–693 (GEDELAIQRL…HQLNQQRQTH (125 aa)) adopt a coiled-coil conformation. The disordered stretch occupies residues 736 to 793 (HEENVLGAEWRNSKGAGSFGVGNSRQPSRKQIPESTNTTDSKISEESGKISVDKLSSI). Residues 777-787 (KISEESGKISV) show a composition bias toward basic and acidic residues.

Functionally, acts as a GTPase activator for the Rac-type GTPase by converting it to an inactive GDP-bound state. In Arabidopsis thaliana (Mouse-ear cress), this protein is Rho GTPase-activating protein 7 (ROPGAP7).